Reading from the N-terminus, the 457-residue chain is Exoenzyme T (457 aa).

Positions 99 to 232 (LSAAEIKQMM…LRHAVESEVK (134 aa)) constitute a Bacterial Rho-GAP domain. Positions 242-418 (DGLVEHFGLE…RVLEEATLGE (177 aa)) constitute a TR mART core domain. Residues Arg322, Ser346, and Glu385 contribute to the active site.

Interacts with chaperone protein SpcS; this interaction maintains ExoT in a secretion competent state within the cytoplasm. Interacts with host YWHAB.

It localises to the secreted. It catalyses the reaction L-arginyl-[protein] + NAD(+) = N(omega)-(ADP-D-ribosyl)-L-arginyl-[protein] + nicotinamide + H(+). Its function is as follows. Bifunctional effector protein that is secreted and delivered by the type III secretion system into eukaryotic target cells. ADP-ribosylates several eukaryotic proteins including CT10 regulator of kinase (Crk) proteins. In turn, induces atypical anoikis apoptosis by transforming Crk adaptor protein into a cytotoxin. Affects host cell morphology by disrupting the actin cytoskeleton. In addition to this activity, acts via its N-terminal region as a GTPase-activating protein (GAP) for host Rho GTPases including RhoA, Rac1, Cdc42 and Ras. The bacterial Rho-GAP domain activity induces mitochondrial disruption in the target host cell by activating host caspases 3 and 9 that execute cellular death. This activity also causes stress fiber disassembly. The sequence is that of Exoenzyme T (exoT) from Pseudomonas aeruginosa (strain ATCC 15692 / DSM 22644 / CIP 104116 / JCM 14847 / LMG 12228 / 1C / PRS 101 / PAO1).